The primary structure comprises 96 residues: ESAT-6-like protein SAG0230 (96 aa).

This sequence belongs to the WXG100 family. sagEsxA-like subfamily. Homodimer.

The chain is ESAT-6-like protein SAG0230 from Streptococcus agalactiae serotype V (strain ATCC BAA-611 / 2603 V/R).